The chain runs to 247 residues: Ribonuclease PH (247 aa).

Phosphate is bound by residues R96 and 134 to 136 (GTR).

It belongs to the RNase PH family. Homohexameric ring arranged as a trimer of dimers.

The enzyme catalyses tRNA(n+1) + phosphate = tRNA(n) + a ribonucleoside 5'-diphosphate. Functionally, phosphorolytic 3'-5' exoribonuclease that plays an important role in tRNA 3'-end maturation. Removes nucleotide residues following the 3'-CCA terminus of tRNAs; can also add nucleotides to the ends of RNA molecules by using nucleoside diphosphates as substrates, but this may not be physiologically important. Probably plays a role in initiation of 16S rRNA degradation (leading to ribosome degradation) during starvation. This chain is Ribonuclease PH, found in Tropheryma whipplei (strain TW08/27) (Whipple's bacillus).